The primary structure comprises 328 residues: V-set and immunoglobulin domain-containing protein 2 (328 aa).

The signal sequence occupies residues 1–24 (MAWPLVGAFLCGHLLGFVCLSGLA). The Ig-like V-type domain occupies 25–138 (VEVTVPTEPL…DFYTNGLGLI (114 aa)). Residues 25 to 244 (VEVTVPTEPL…VTDSSEGRVA (220 aa)) are Extracellular-facing. Cys46 and Cys122 form a disulfide bridge. Asn139, Asn207, and Asn232 each carry an N-linked (GlcNAc...) asparagine glycan. The Ig-like C2-type domain maps to 145 to 234 (PPSHPLCSQS…GSASCELNLS (90 aa)). A disulfide bridge connects residues Cys167 and Cys218. The chain crosses the membrane as a helical span at residues 245 to 265 (GTLIGVLLGVLLLSVAAFCLI). Topologically, residues 266–328 (RFQKERKKEP…TTKSKLSMVV (63 aa)) are cytoplasmic.

In terms of tissue distribution, expressed in the stomach, colon and prostate.

It is found in the membrane. The protein is V-set and immunoglobulin domain-containing protein 2 (Vsig2) of Mus musculus (Mouse).